A 452-amino-acid polypeptide reads, in one-letter code: Bifunctional protein GlmU (452 aa).

A pyrophosphorylase region spans residues 1-230; it reads MSRSRSAIIL…ADEVLGVNSR (230 aa). UDP-N-acetyl-alpha-D-glucosamine is bound by residues 10–13, lysine 24, glutamine 75, and 80–81; these read LAAG and GT. Residue aspartate 105 coordinates Mg(2+). UDP-N-acetyl-alpha-D-glucosamine contacts are provided by glycine 141, glutamate 156, asparagine 171, and asparagine 228. Asparagine 228 lines the Mg(2+) pocket. The linker stretch occupies residues 231–251; that stretch reads ADLAEAEAAFQSRMRQSMMAD. An N-acetyltransferase region spans residues 252–452; the sequence is GVTLIAPETV…ARKARKDSQT (201 aa). The UDP-N-acetyl-alpha-D-glucosamine site is built by arginine 317 and lysine 335. The active-site Proton acceptor is the histidine 347. UDP-N-acetyl-alpha-D-glucosamine contacts are provided by tyrosine 350 and asparagine 361. Residues alanine 364, 370–371, serine 389, threonine 407, and arginine 424 each bind acetyl-CoA; that span reads NY.

It in the N-terminal section; belongs to the N-acetylglucosamine-1-phosphate uridyltransferase family. The protein in the C-terminal section; belongs to the transferase hexapeptide repeat family. In terms of assembly, homotrimer. Requires Mg(2+) as cofactor.

The protein localises to the cytoplasm. The catalysed reaction is alpha-D-glucosamine 1-phosphate + acetyl-CoA = N-acetyl-alpha-D-glucosamine 1-phosphate + CoA + H(+). It catalyses the reaction N-acetyl-alpha-D-glucosamine 1-phosphate + UTP + H(+) = UDP-N-acetyl-alpha-D-glucosamine + diphosphate. It participates in nucleotide-sugar biosynthesis; UDP-N-acetyl-alpha-D-glucosamine biosynthesis; N-acetyl-alpha-D-glucosamine 1-phosphate from alpha-D-glucosamine 6-phosphate (route II): step 2/2. Its pathway is nucleotide-sugar biosynthesis; UDP-N-acetyl-alpha-D-glucosamine biosynthesis; UDP-N-acetyl-alpha-D-glucosamine from N-acetyl-alpha-D-glucosamine 1-phosphate: step 1/1. The protein operates within bacterial outer membrane biogenesis; LPS lipid A biosynthesis. In terms of biological role, catalyzes the last two sequential reactions in the de novo biosynthetic pathway for UDP-N-acetylglucosamine (UDP-GlcNAc). The C-terminal domain catalyzes the transfer of acetyl group from acetyl coenzyme A to glucosamine-1-phosphate (GlcN-1-P) to produce N-acetylglucosamine-1-phosphate (GlcNAc-1-P), which is converted into UDP-GlcNAc by the transfer of uridine 5-monophosphate (from uridine 5-triphosphate), a reaction catalyzed by the N-terminal domain. This is Bifunctional protein GlmU from Maricaulis maris (strain MCS10) (Caulobacter maris).